Reading from the N-terminus, the 229-residue chain is Ribulose-phosphate 3-epimerase (229 aa).

Substrate is bound at residue Ser-12. Positions 37, 39, and 70 each coordinate a divalent metal cation. Asp-39 acts as the Proton acceptor in catalysis. Substrate is bound by residues His-70, 146 to 149 (GFTG), 181 to 183 (DGG), and 203 to 204 (AS). A divalent metal cation is bound at residue Asp-181. Asp-181 acts as the Proton donor in catalysis.

This sequence belongs to the ribulose-phosphate 3-epimerase family. It depends on a divalent metal cation as a cofactor.

The enzyme catalyses D-ribulose 5-phosphate = D-xylulose 5-phosphate. The protein operates within carbohydrate degradation. In terms of biological role, catalyzes the reversible epimerization of D-ribulose 5-phosphate to D-xylulose 5-phosphate. This is Ribulose-phosphate 3-epimerase from Chlamydia pneumoniae (Chlamydophila pneumoniae).